A 256-amino-acid polypeptide reads, in one-letter code: 5-oxoprolinase subunit A (256 aa).

This sequence belongs to the LamB/PxpA family. As to quaternary structure, forms a complex composed of PxpA, PxpB and PxpC.

It catalyses the reaction 5-oxo-L-proline + ATP + 2 H2O = L-glutamate + ADP + phosphate + H(+). Functionally, catalyzes the cleavage of 5-oxoproline to form L-glutamate coupled to the hydrolysis of ATP to ADP and inorganic phosphate. The chain is 5-oxoprolinase subunit A from Geobacillus thermodenitrificans (strain NG80-2).